The following is a 338-amino-acid chain: Penicillin V acylase (338 aa).

Positions 1-3 are cleaved as a propeptide — removed in mature form; it reads MLG. The active-site Nucleophile is the cysteine 4.

Belongs to the peptidase C59 family. In terms of assembly, homotetramer. Post-translationally, expressed as an inactive precursor that is cleaved autocatalytically at Gly-3/Cys-4 to generate an active enzyme. Processing exposes a catalytic N-terminal nucleophile residue with a free alpha amino group.

The catalysed reaction is a penicillin + H2O = 6-aminopenicillanate + a carboxylate. With respect to regulation, hydrolase activity is rapidly inhibited by lysine modifying reagents. Its function is as follows. Catalyzes the hydrolysis of penicillin V to 6-aminopenicillanate (6-APA). Exhibits high specificity for penicillin V. Penicillin G and other related compounds are hydrolyzed at less than 10% of the rate of penicillin V. Among the cephalosporins, cephalosporin C is resistant to cleavage, whereas cephalosporin G is cleaved at about 1% of the rate of cleavage of penicillin V. This Lysinibacillus sphaericus (Bacillus sphaericus) protein is Penicillin V acylase.